The chain runs to 475 residues: Probable L-cysteine desulfhydrase, chloroplastic (475 aa).

The N-terminal 24 residues, 1-24, are a transit peptide targeting the chloroplast; it reads MASSLSPPEEASYHHRHTKRYTSS. Residues 1–40 form a disordered region; the sequence is MASSLSPPEEASYHHRHTKRYTSSASSASSTTNGTVESSV. The span at 22–32 shows a compositional bias: low complexity; that stretch reads TSSASSASSTT. Lys284 bears the N6-(pyridoxal phosphate)lysine mark.

This sequence belongs to the class-V pyridoxal-phosphate-dependent aminotransferase family. As to quaternary structure, interacts in vitro with QS.

It localises to the plastid. The protein localises to the chloroplast. Functionally, may catalyze the production of hydrogen sulfide (H2S) from cysteine. The protein is Probable L-cysteine desulfhydrase, chloroplastic of Arabidopsis thaliana (Mouse-ear cress).